The sequence spans 102 residues: ATP-dependent Clp protease adapter protein ClpS (102 aa).

It belongs to the ClpS family. Binds to the N-terminal domain of the chaperone ClpA.

Its function is as follows. Involved in the modulation of the specificity of the ClpAP-mediated ATP-dependent protein degradation. This is ATP-dependent Clp protease adapter protein ClpS from Janthinobacterium sp. (strain Marseille) (Minibacterium massiliensis).